Here is a 156-residue protein sequence, read N- to C-terminus: ATP synthase subunit b 1 (156 aa).

The chain crosses the membrane as a helical span at residues 7–29 (LLGQAISFALFVWFCMKYVWPPL).

It belongs to the ATPase B chain family. In terms of assembly, F-type ATPases have 2 components, F(1) - the catalytic core - and F(0) - the membrane proton channel. F(1) has five subunits: alpha(3), beta(3), gamma(1), delta(1), epsilon(1). F(0) has three main subunits: a(1), b(2) and c(10-14). The alpha and beta chains form an alternating ring which encloses part of the gamma chain. F(1) is attached to F(0) by a central stalk formed by the gamma and epsilon chains, while a peripheral stalk is formed by the delta and b chains.

It localises to the cell inner membrane. Functionally, f(1)F(0) ATP synthase produces ATP from ADP in the presence of a proton or sodium gradient. F-type ATPases consist of two structural domains, F(1) containing the extramembraneous catalytic core and F(0) containing the membrane proton channel, linked together by a central stalk and a peripheral stalk. During catalysis, ATP synthesis in the catalytic domain of F(1) is coupled via a rotary mechanism of the central stalk subunits to proton translocation. Component of the F(0) channel, it forms part of the peripheral stalk, linking F(1) to F(0). The sequence is that of ATP synthase subunit b 1 from Vibrio campbellii (strain ATCC BAA-1116).